The sequence spans 168 residues: 2-oxo-4-hydroxy-4-carboxy-5-ureidoimidazoline decarboxylase (168 aa).

Catalysis depends on His70, which acts as the Proton donor; for OHCU decarboxylase activity. A compositionally biased stretch (basic and acidic residues) spans 70–79 (HPDLGERTEM). The disordered stretch occupies residues 70–93 (HPDLGERTEMTDASEAEQASAELD). Substrate-binding positions include Pro71, 83-87 (SEAEQ), and 118-122 (FVMAV).

It belongs to the OHCU decarboxylase family.

The enzyme catalyses 5-hydroxy-2-oxo-4-ureido-2,5-dihydro-1H-imidazole-5-carboxylate + H(+) = (S)-allantoin + CO2. The protein operates within purine metabolism; urate degradation; (S)-allantoin from urate: step 3/3. Its function is as follows. Catalyzes the stereoselective decarboxylation of 2-oxo-4-hydroxy-4-carboxy-5-ureidoimidazoline (OHCU) to (S)-allantoin. The sequence is that of 2-oxo-4-hydroxy-4-carboxy-5-ureidoimidazoline decarboxylase from Haloferax volcanii (strain ATCC 29605 / DSM 3757 / JCM 8879 / NBRC 14742 / NCIMB 2012 / VKM B-1768 / DS2) (Halobacterium volcanii).